The primary structure comprises 343 residues: Sulfate/thiosulfate import ATP-binding protein CysA (343 aa).

The region spanning 3–237 is the ABC transporter domain; that stretch reads IRISHLRKQF…PASPFVYSFV (235 aa). ATP is bound at residue 35–42; it reads GPSGSGKT.

This sequence belongs to the ABC transporter superfamily. Sulfate/tungstate importer (TC 3.A.1.6) family. As to quaternary structure, the complex is composed of two ATP-binding proteins (CysA), two transmembrane proteins (CysT and CysW) and a solute-binding protein (CysP).

It localises to the cell inner membrane. It carries out the reaction sulfate(out) + ATP + H2O = sulfate(in) + ADP + phosphate + H(+). The catalysed reaction is thiosulfate(out) + ATP + H2O = thiosulfate(in) + ADP + phosphate + H(+). Functionally, part of the ABC transporter complex CysAWTP involved in sulfate/thiosulfate import. Responsible for energy coupling to the transport system. This chain is Sulfate/thiosulfate import ATP-binding protein CysA, found in Xanthomonas campestris pv. campestris (strain ATCC 33913 / DSM 3586 / NCPPB 528 / LMG 568 / P 25).